A 400-amino-acid polypeptide reads, in one-letter code: Acetate kinase (400 aa).

Mg(2+) is bound at residue Asn10. Lys17 is an ATP binding site. Arg91 is a binding site for substrate. Asp150 functions as the Proton donor/acceptor in the catalytic mechanism. ATP is bound by residues 210–214, 285–287, and 333–337; these read HLGNG, DCR, and GIGEN. Glu387 contacts Mg(2+).

The protein belongs to the acetokinase family. As to quaternary structure, homodimer. Mg(2+) is required as a cofactor. The cofactor is Mn(2+).

The protein resides in the cytoplasm. The enzyme catalyses acetate + ATP = acetyl phosphate + ADP. The protein operates within metabolic intermediate biosynthesis; acetyl-CoA biosynthesis; acetyl-CoA from acetate: step 1/2. Its function is as follows. Catalyzes the formation of acetyl phosphate from acetate and ATP. Can also catalyze the reverse reaction. The sequence is that of Acetate kinase from Pectobacterium atrosepticum (strain SCRI 1043 / ATCC BAA-672) (Erwinia carotovora subsp. atroseptica).